Reading from the N-terminus, the 100-residue chain is Urease subunit gamma (100 aa).

The protein belongs to the urease gamma subunit family. In terms of assembly, heterotrimer of UreA (gamma), UreB (beta) and UreC (alpha) subunits. Three heterotrimers associate to form the active enzyme.

It localises to the cytoplasm. It carries out the reaction urea + 2 H2O + H(+) = hydrogencarbonate + 2 NH4(+). It participates in nitrogen metabolism; urea degradation; CO(2) and NH(3) from urea (urease route): step 1/1. The sequence is that of Urease subunit gamma from Nitrosococcus oceani (strain ATCC 19707 / BCRC 17464 / JCM 30415 / NCIMB 11848 / C-107).